Here is a 113-residue protein sequence, read N- to C-terminus: MLIAGTLCVCAAVISAVFGTWALIHNQTVDPTQLAMRAMAPPQLAAAIMLAAGGVVALVAVAHTALIVVAVCVTGAVGTLAAGSWQSARYTLRRRATATSCGKNCAGCILSCR.

The next 2 membrane-spanning stretches (helical) occupy residues 1–21 (MLIA…FGTW) and 48–68 (IMLA…ALIV).

To M.tuberculosis Rv0039.

It localises to the cell membrane. This is an uncharacterized protein from Mycobacterium leprae (strain TN).